The following is a 317-amino-acid chain: Methionyl-tRNA formyltransferase (317 aa).

110–113 is a (6S)-5,6,7,8-tetrahydrofolate binding site; sequence SLLP.

The protein belongs to the Fmt family.

The enzyme catalyses L-methionyl-tRNA(fMet) + (6R)-10-formyltetrahydrofolate = N-formyl-L-methionyl-tRNA(fMet) + (6S)-5,6,7,8-tetrahydrofolate + H(+). Functionally, attaches a formyl group to the free amino group of methionyl-tRNA(fMet). The formyl group appears to play a dual role in the initiator identity of N-formylmethionyl-tRNA by promoting its recognition by IF2 and preventing the misappropriation of this tRNA by the elongation apparatus. The sequence is that of Methionyl-tRNA formyltransferase from Bacillus pumilus (strain SAFR-032).